We begin with the raw amino-acid sequence, 62 residues long: MIPVRCFTCGKVISTAYEEFKRRRDASEDPKRILDDLGMDRYCCRRMLLTHKEIIDELNPYQ.

Residues C6, C9, C43, and C44 each coordinate Zn(2+).

The protein belongs to the archaeal Rpo10/eukaryotic RPB10 RNA polymerase subunit family. As to quaternary structure, part of the RNA polymerase complex. It depends on Zn(2+) as a cofactor.

Its subcellular location is the cytoplasm. It catalyses the reaction RNA(n) + a ribonucleoside 5'-triphosphate = RNA(n+1) + diphosphate. Functionally, DNA-dependent RNA polymerase (RNAP) catalyzes the transcription of DNA into RNA using the four ribonucleoside triphosphates as substrates. This Methanospirillum hungatei JF-1 (strain ATCC 27890 / DSM 864 / NBRC 100397 / JF-1) protein is DNA-directed RNA polymerase subunit Rpo10.